Consider the following 196-residue polypeptide: Adenylate kinase (196 aa).

G9–T17 contributes to the ATP binding site.

The protein belongs to the archaeal adenylate kinase family.

It is found in the cytoplasm. It carries out the reaction AMP + ATP = 2 ADP. This is Adenylate kinase (adkA) from Pyrococcus abyssi (strain GE5 / Orsay).